The chain runs to 421 residues: NADH-dependent phenylglyoxylate dehydrogenase subunit epsilon (421 aa).

FAD-binding positions include 15 to 18, 39 to 40, and 279 to 297; these read SSHA, TR, and ATAQ…NAIL.

The protein belongs to the FAD-dependent oxidoreductase family. Dimer of heteropentamers composed of an alpha (PadG), a beta (PadI), a gamma (PadE), a delta (PadF) and an epsilon (PadH) subunit. Requires FAD as cofactor.

It carries out the reaction phenylglyoxylate + NAD(+) + CoA = benzoyl-CoA + CO2 + NADH. With respect to regulation, activated by magnesium ions and thiamine diphosphate. Its function is as follows. Involved in the anaerobic metabolism of phenylalanine and phenylacetate. Catalyzes the oxidative decarboxylation of phenylglyoxylate to benzoyl-CoA and CO(2). It can also react slowly with 2-oxo-3-methylbutanoate and use different electron acceptors such as benzyl viologen, methyl viologen, FAD or FMN, but NAD seems to be the physiological electron acceptor. Also catalyzes an isotope exchange between CO(2) and the carboxyl group which proves partial or complete reversibility of the oxidative decarboxylation reaction. This Aromatoleum evansii (Azoarcus evansii) protein is NADH-dependent phenylglyoxylate dehydrogenase subunit epsilon (padH).